The primary structure comprises 171 residues: 3-hydroxydecanoyl-[acyl-carrier-protein] dehydratase (171 aa).

Histidine 70 is an active-site residue.

It belongs to the thioester dehydratase family. FabA subfamily. As to quaternary structure, homodimer.

It is found in the cytoplasm. The catalysed reaction is a (3R)-hydroxyacyl-[ACP] = a (2E)-enoyl-[ACP] + H2O. It carries out the reaction (3R)-hydroxydecanoyl-[ACP] = (2E)-decenoyl-[ACP] + H2O. It catalyses the reaction (2E)-decenoyl-[ACP] = (3Z)-decenoyl-[ACP]. It participates in lipid metabolism; fatty acid biosynthesis. In terms of biological role, necessary for the introduction of cis unsaturation into fatty acids. Catalyzes the dehydration of (3R)-3-hydroxydecanoyl-ACP to E-(2)-decenoyl-ACP and then its isomerization to Z-(3)-decenoyl-ACP. Can catalyze the dehydratase reaction for beta-hydroxyacyl-ACPs with saturated chain lengths up to 16:0, being most active on intermediate chain length. The chain is 3-hydroxydecanoyl-[acyl-carrier-protein] dehydratase from Pseudomonas putida (strain W619).